We begin with the raw amino-acid sequence, 242 residues long: DNA-directed RNA polymerase III subunit rpc5 (242 aa).

Disordered regions lie at residues 1–22 and 153–172; these read MSFSEDQAMEEAKLRNDETEEQ and LKAAAGPSNSSSGTSTPRGP. Over residues 155–172 the composition is skewed to low complexity; it reads AAAGPSNSSSGTSTPRGP.

As to quaternary structure, component of the RNA polymerase III (Pol III) complex consisting of 17 subunits.

Its subcellular location is the cytoplasm. The protein localises to the nucleus. Its function is as follows. DNA-dependent RNA polymerase catalyzes the transcription of DNA into RNA using the four ribonucleoside triphosphates as substrates. Specific peripheric component of RNA polymerase III which synthesizes small RNAs, such as 5S rRNA and tRNAs. The RPC53/RPC4-RPC37/RPC5 subcomplex is required for terminator recognition and reinitiation. The polypeptide is DNA-directed RNA polymerase III subunit rpc5 (rpc37) (Schizosaccharomyces pombe (strain 972 / ATCC 24843) (Fission yeast)).